The following is a 957-amino-acid chain: Glycine dehydrogenase (decarboxylating) (957 aa).

At Lys-708 the chain carries N6-(pyridoxal phosphate)lysine.

This sequence belongs to the GcvP family. The glycine cleavage system is composed of four proteins: P, T, L and H. The cofactor is pyridoxal 5'-phosphate.

The enzyme catalyses N(6)-[(R)-lipoyl]-L-lysyl-[glycine-cleavage complex H protein] + glycine + H(+) = N(6)-[(R)-S(8)-aminomethyldihydrolipoyl]-L-lysyl-[glycine-cleavage complex H protein] + CO2. Functionally, the glycine cleavage system catalyzes the degradation of glycine. The P protein binds the alpha-amino group of glycine through its pyridoxal phosphate cofactor; CO(2) is released and the remaining methylamine moiety is then transferred to the lipoamide cofactor of the H protein. This Escherichia coli (strain K12 / MC4100 / BW2952) protein is Glycine dehydrogenase (decarboxylating).